The following is an 893-amino-acid chain: MPLDPDSSPAPPHRDWFFPPAPPFLPSSRARTPRAPFPSTSRSSNPYSFPDRRPPPTPRSRSRSPLPPPEQQKQQQPPPTTPPPAPRRRDPRYAGVRRGDVRTLTAEKAAAAAAVPTAAQVHGSKSAASATTLRWSGMVSVAAIVLCFSSLVRSNSSLHDQVHHLKAQLAEATTKLQSCITESSMDMSSILSYQSNNSTSQNRGLKNFSLLLSLSTLYAPLLILKYMDLFLKLRSSQDSEEEVPINKRLAYRVDIFLSLQPYAKPLVLLVATLLLIGLGGLALYGVNDDSLLDCLWLSWTFVADSGNHANAEGFGPKLVSVSISIGGMLVFAMMLGLVTDSISEKFDSLRKGRSEVIEQSHTLVLGWSDKLGSLLNQIAIANESLGGGTIVVMAEKDKEEMEADIAKMEFDLKGTAIICRSGSPLILADLKKVSVSKARAIVVLAEEGNADQSDARALRTVLSLTGVKEGLRGHIVVELSDLDNEVLVKLVGGDLVETVVAHDVIGRLMIQCARQPGLAQIWEDILGFENCEFYIKRWPQLDGMQFEDVLISFPDAIPCGIKVASYGGKIILNPDDFYVLQEGDEVLVIAEDDDTYAPAPLPKVMRGYLPKDFVVPKSPERILFCGWRRDMEDMIMVLDAFLAPGSELWMFNDVPEMDRERKLIDGGLDFSRLENITLVHREGNAVIRRHLESLPLESFDSILILADESVEDSAIQADSRSLATLLLIRDIQAKRLPFREAMVSHVTRGSFCEGSWIGEMQQASDKSVIISEILDPRTKNLLSVSKISDYVLSNELVSMALAMVAEDRQINDVLEELFAEQGNEMQIRPADLYLREDEELNFFEVMLRGRQRKEIVIGYRLVDAERAIINPPDKVSRRRWSAKDVFVVITEKE.

A disordered region spans residues 1 to 94 (MPLDPDSSPA…APRRRDPRYA (94 aa)). The segment covering 65–85 (PLPPPEQQKQQQPPPTTPPPA) has biased composition (pro residues). Residues 132–152 (TLRWSGMVSVAAIVLCFSSLV) form a helical membrane-spanning segment. Positions 156–178 (SSLHDQVHHLKAQLAEATTKLQS) form a coiled coil. A run of 3 helical transmembrane segments spans residues 210–230 (LLLSLSTLYAPLLILKYMDLF), 266–286 (LVLLVATLLLIGLGGLALYGV), and 318–338 (LVSVSISIGGMLVFAMMLGLV). RCK N-terminal domains are found at residues 359 to 500 (QSHT…ETVV) and 619 to 792 (PERI…DYVL). Positions 389-415 (TIVVMAEKDKEEMEADIAKMEFDLKGT) form a coiled coil.

Belongs to the castor/pollux (TC 1.A.1.23) family. Expressed in roots, leaves, stems and panicles.

The protein resides in the nucleus membrane. Its function is as follows. Required for mycorrhizal symbiosis. This is Probable ion channel CASTOR from Oryza sativa subsp. japonica (Rice).